We begin with the raw amino-acid sequence, 172 residues long: Large ribosomal subunit protein uL10 (172 aa).

The protein belongs to the universal ribosomal protein uL10 family. Part of the ribosomal stalk of the 50S ribosomal subunit. The N-terminus interacts with L11 and the large rRNA to form the base of the stalk. The C-terminus forms an elongated spine to which L12 dimers bind in a sequential fashion forming a multimeric L10(L12)X complex.

In terms of biological role, forms part of the ribosomal stalk, playing a central role in the interaction of the ribosome with GTP-bound translation factors. This chain is Large ribosomal subunit protein uL10, found in Mesorhizobium japonicum (strain LMG 29417 / CECT 9101 / MAFF 303099) (Mesorhizobium loti (strain MAFF 303099)).